A 477-amino-acid polypeptide reads, in one-letter code: Glutamyl-tRNA reductase (477 aa).

Substrate contacts are provided by residues 49-52 (TCNR), Ser109, 114-116 (EQQ), and Gln120. Cys50 acts as the Nucleophile in catalysis. 189–194 (GAGAMG) provides a ligand contact to NADP(+).

The protein belongs to the glutamyl-tRNA reductase family. In terms of assembly, homodimer.

It carries out the reaction (S)-4-amino-5-oxopentanoate + tRNA(Glu) + NADP(+) = L-glutamyl-tRNA(Glu) + NADPH + H(+). It functions in the pathway porphyrin-containing compound metabolism; protoporphyrin-IX biosynthesis; 5-aminolevulinate from L-glutamyl-tRNA(Glu): step 1/2. In terms of biological role, catalyzes the NADPH-dependent reduction of glutamyl-tRNA(Glu) to glutamate 1-semialdehyde (GSA). This Nocardia farcinica (strain IFM 10152) protein is Glutamyl-tRNA reductase.